The chain runs to 390 residues: NADH-dependent butanol dehydrogenase B (390 aa).

The protein belongs to the iron-containing alcohol dehydrogenase family. Homodimer.

The protein operates within alcohol metabolism; butanol biosynthesis. In Clostridium acetobutylicum (strain ATCC 824 / DSM 792 / JCM 1419 / IAM 19013 / LMG 5710 / NBRC 13948 / NRRL B-527 / VKM B-1787 / 2291 / W), this protein is NADH-dependent butanol dehydrogenase B (bdhB).